The following is a 270-amino-acid chain: Phosphatidylglycerol--prolipoprotein diacylglyceryl transferase (270 aa).

7 helical membrane passes run V10–I30, L56–Y76, W92–F112, F120–I140, S175–A195, M202–V222, and V237–L257. R139 provides a ligand contact to a 1,2-diacyl-sn-glycero-3-phospho-(1'-sn-glycerol).

Belongs to the Lgt family.

It is found in the cell inner membrane. The catalysed reaction is L-cysteinyl-[prolipoprotein] + a 1,2-diacyl-sn-glycero-3-phospho-(1'-sn-glycerol) = an S-1,2-diacyl-sn-glyceryl-L-cysteinyl-[prolipoprotein] + sn-glycerol 1-phosphate + H(+). It participates in protein modification; lipoprotein biosynthesis (diacylglyceryl transfer). Catalyzes the transfer of the diacylglyceryl group from phosphatidylglycerol to the sulfhydryl group of the N-terminal cysteine of a prolipoprotein, the first step in the formation of mature lipoproteins. In Pseudomonas syringae pv. tomato (strain ATCC BAA-871 / DC3000), this protein is Phosphatidylglycerol--prolipoprotein diacylglyceryl transferase.